Consider the following 651-residue polypeptide: LysM domain receptor-like kinase 3 (651 aa).

The N-terminal stretch at 1 to 19 (MNLTFYIFFLSLLPSFSSS) is a signal peptide. 8 N-linked (GlcNAc...) asparagine glycosylation sites follow: Asn-2, Asn-23, Asn-42, Asn-73, Asn-86, Asn-100, Asn-114, and Asn-177. At 20 to 236 (KPMNCSDTTR…TAKSGSHVPY (217 aa)) the chain is on the extracellular side. Cystine bridges form between Cys-24–Cys-76, Cys-31–Cys-133, and Cys-74–Cys-131. Positions 142 to 186 (MSYVAMAGDSVQSLSSRFGVSMDRIEDVNGILNLDNITAGDLLYI) constitute a LysM domain. The interval 196-216 (YETSKINPPAPSPAPASSLAN) is disordered. N-linked (GlcNAc...) asparagine glycosylation is found at Asn-218 and Asn-225. Residues 237–257 (IWIVGGLGVVLALLVLCILVC) traverse the membrane as a helical segment. Residues 258-651 (ICLRSSSCSS…QVFSGLVQGR (394 aa)) lie on the Cytoplasmic side of the membrane. The residue at position 330 (Thr-330) is a Phosphothreonine. Residues 341 to 628 (FSDSNLLGHG…VVISLSQILL (288 aa)) enclose the Protein kinase domain. Residues 347 to 355 (LGHGNYGSV) and Lys-368 contribute to the ATP site. The residue at position 410 (Tyr-410) is a Phosphotyrosine. The Proton acceptor role is filled by Asp-464. Residue Ser-468 is modified to Phosphoserine. Phosphothreonine occurs at positions 500 and 505. Tyr-513 bears the Phosphotyrosine mark.

This sequence belongs to the protein kinase superfamily. Ser/Thr protein kinase family.

The protein resides in the cell membrane. In terms of biological role, putative Lysin motif (LysM) receptor kinase that may recognize microbe-derived N-acetylglucosamine (NAG)-containing ligands. In Arabidopsis thaliana (Mouse-ear cress), this protein is LysM domain receptor-like kinase 3 (LYK3).